A 487-amino-acid chain; its full sequence is Probable cobyric acid synthase (487 aa).

One can recognise a GATase cobBQ-type domain in the interval 246–431 (LVRIAVIRLP…LHGLFMVPAA (186 aa)). The Nucleophile role is filled by cysteine 325. Histidine 423 is a catalytic residue.

It belongs to the CobB/CobQ family. CobQ subfamily.

The protein operates within cofactor biosynthesis; adenosylcobalamin biosynthesis. Functionally, catalyzes amidations at positions B, D, E, and G on adenosylcobyrinic A,C-diamide. NH(2) groups are provided by glutamine, and one molecule of ATP is hydrogenolyzed for each amidation. The protein is Probable cobyric acid synthase of Methanosphaerula palustris (strain ATCC BAA-1556 / DSM 19958 / E1-9c).